A 413-amino-acid polypeptide reads, in one-letter code: 3-isopropylmalate dehydratase large subunit (413 aa).

Positions 293, 353, and 356 each coordinate [4Fe-4S] cluster.

It belongs to the aconitase/IPM isomerase family. LeuC type 2 subfamily. In terms of assembly, heterodimer of LeuC and LeuD. It depends on [4Fe-4S] cluster as a cofactor.

It carries out the reaction (2R,3S)-3-isopropylmalate = (2S)-2-isopropylmalate. It participates in amino-acid biosynthesis; L-leucine biosynthesis; L-leucine from 3-methyl-2-oxobutanoate: step 2/4. Functionally, catalyzes the isomerization between 2-isopropylmalate and 3-isopropylmalate, via the formation of 2-isopropylmaleate. This chain is 3-isopropylmalate dehydratase large subunit, found in Picrophilus torridus (strain ATCC 700027 / DSM 9790 / JCM 10055 / NBRC 100828 / KAW 2/3).